A 309-amino-acid polypeptide reads, in one-letter code: Fructosamine-3-kinase (309 aa).

At Met1 the chain carries N-acetylmethionine. 89–91 contacts ATP; it reads EHL. Asp217 (proton acceptor) is an active-site residue.

Belongs to the fructosamine kinase family. In terms of assembly, monomer. As to expression, expressed in red blood cells, brain, heart, kidney and muscle. Lower expression is observed in liver. Not expressed in lung, spleen, testis and thymus.

It catalyses the reaction N(6)-(D-fructosyl)-L-lysyl-[protein] + ATP = N(6)-(3-O-phospho-D-fructosyl)-L-lysyl-[protein] + ADP + H(+). The catalysed reaction is N(6)-D-ribulosyl-L-lysyl-[protein] + ATP = N(6)-(3-O-phospho-D-ribulosyl)-L-lysyl-[protein] + ADP + H(+). It carries out the reaction N(6)-(D-psicosyl)-L-lysyl-[protein] + ATP = N(6)-(3-O-phospho-D-psicosyl)-L-lysyl-[protein] + ADP + H(+). Fructosamine-3-kinase involved in protein deglycation by mediating phosphorylation of fructoselysine residues on glycated proteins, to generate fructoselysine-3 phosphate. Fructoselysine-3 phosphate adducts are unstable and decompose under physiological conditions. Involved in intracellular deglycation in erythrocytes and pancreatic islets. Involved in the response to oxidative stress by mediating deglycation of NFE2L2/NRF2, glycation impairing NFE2L2/NRF2 function. Also able to phosphorylate psicosamines and ribulosamines. The protein is Fructosamine-3-kinase of Mus musculus (Mouse).